The chain runs to 351 residues: SKP1-like protein 21 (351 aa).

The segment at 108–167 (TSAADSLQLKPLVDLTSRALARIIEGKTPEEIREIFHLPDDLTEEEKLEPLKNTMDDPRI) is interaction with the F-box domain of F-box proteins. 2 disordered regions span residues 216–240 (VKTSKSKKKNKKRKEQKNGSSNGTC) and 330–351 (VNFSINGNGTSRRLTGPAAGHK). The span at 217 to 230 (KTSKSKKKNKKRKE) shows a compositional bias: basic residues. Positions 330–342 (VNFSINGNGTSRR) are enriched in polar residues.

This sequence belongs to the SKP1 family. Part of a SCF (SKP1-cullin-F-box) protein ligase complex. Expressed in young seedlings, roots, leaves, floral stems, inflorescences, and siliques.

It is found in the nucleus. The protein operates within protein modification; protein ubiquitination. In terms of biological role, involved in ubiquitination and subsequent proteasomal degradation of target proteins. Together with CUL1, RBX1 and a F-box protein, it forms a SCF E3 ubiquitin ligase complex. The functional specificity of this complex depends on the type of F-box protein. In the SCF complex, it serves as an adapter that links the F-box protein to CUL1. In Arabidopsis thaliana (Mouse-ear cress), this protein is SKP1-like protein 21 (ASK21).